The following is a 61-amino-acid chain: Large ribosomal subunit protein eL37 (61 aa).

Zn(2+)-binding residues include C18, C21, C33, and C36. The C4-type zinc finger occupies 18–36; the sequence is CRRCGRNAYNPTKKYCASC.

This sequence belongs to the eukaryotic ribosomal protein eL37 family. Requires Zn(2+) as cofactor.

Binds to the 23S rRNA. The sequence is that of Large ribosomal subunit protein eL37 from Methanosphaera stadtmanae (strain ATCC 43021 / DSM 3091 / JCM 11832 / MCB-3).